The chain runs to 172 residues: Endoribonuclease YbeY (172 aa).

Positions 124, 128, and 134 each coordinate Zn(2+).

This sequence belongs to the endoribonuclease YbeY family. It depends on Zn(2+) as a cofactor.

The protein localises to the cytoplasm. Single strand-specific metallo-endoribonuclease involved in late-stage 70S ribosome quality control and in maturation of the 3' terminus of the 16S rRNA. In Rhodopseudomonas palustris (strain BisA53), this protein is Endoribonuclease YbeY.